Consider the following 203-residue polypeptide: dITP/XTP pyrophosphatase (203 aa).

15 to 20 (SGNAGK) provides a ligand contact to substrate. 2 residues coordinate Mg(2+): Glu45 and Asp74. Catalysis depends on Asp74, which acts as the Proton acceptor. Residues Ser75, 153–156 (FGYD), Lys176, and 181–182 (HR) each bind substrate.

The protein belongs to the HAM1 NTPase family. In terms of assembly, homodimer. The cofactor is Mg(2+).

It carries out the reaction XTP + H2O = XMP + diphosphate + H(+). It catalyses the reaction dITP + H2O = dIMP + diphosphate + H(+). The enzyme catalyses ITP + H2O = IMP + diphosphate + H(+). Functionally, pyrophosphatase that catalyzes the hydrolysis of nucleoside triphosphates to their monophosphate derivatives, with a high preference for the non-canonical purine nucleotides XTP (xanthosine triphosphate), dITP (deoxyinosine triphosphate) and ITP. Seems to function as a house-cleaning enzyme that removes non-canonical purine nucleotides from the nucleotide pool, thus preventing their incorporation into DNA/RNA and avoiding chromosomal lesions. This Prochlorococcus marinus (strain MIT 9313) protein is dITP/XTP pyrophosphatase.